A 246-amino-acid chain; its full sequence is D-erythrulose reductase (246 aa).

Position 13 to 41 (13 to 41 (LVTGAGKGIGRAVAVALCKAGARVTALSR)) interacts with NADP(+). Position 138 (Ser-138) interacts with substrate. Tyr-151 (proton acceptor) is an active-site residue. Lys-155 contributes to the NADP(+) binding site.

It belongs to the short-chain dehydrogenases/reductases (SDR) family. In terms of assembly, homotetramer. In terms of processing, the N-terminus is blocked. Highly expressed in kidney, and also found in high amounts in liver and testis. Low expression seen in all other tissues tested.

It is found in the cytoplasm. It carries out the reaction D-threitol + NADP(+) = D-erythrulose + NADPH + H(+). The catalysed reaction is xylitol + NADP(+) = L-xylulose + NADPH + H(+). Functionally, catalyzes the reduction of D-erythrulose to D-threitol with the concomitant oxidation of NAD(P)H to NAD(P)(+). NADH is less effective than NADPH. May also catalyze the reduction of L-xylulose. The polypeptide is D-erythrulose reductase (DER) (Gallus gallus (Chicken)).